A 145-amino-acid polypeptide reads, in one-letter code: Dihydrolipoyllysine-residue succinyltransferase component of 2-oxoglutarate dehydrogenase complex, mitochondrial (145 aa).

The region spanning isoleucine 4 to leucine 31 is the Lipoyl-binding domain. Serine 14 bears the Phosphoserine mark. Residues lysine 36 and lysine 66 each carry the N6-acetyllysine modification. Active-site residues include histidine 119 and aspartate 123.

This sequence belongs to the 2-oxoacid dehydrogenase family. The 2-oxoglutarate dehydrogenase complex is composed of OGDH (2-oxoglutarate dehydrogenase; E1), DLST (dihydrolipoamide succinyltransferase; E2), DLD (dihydrolipoamide dehydrogenase; E3) and the assembly factor KGD4. It contains multiple copies of the three enzymatic components (E1, E2 and E3). In the nucleus, the 2-oxoglutarate dehydrogenase complex associates with KAT2A. Interacts with ABHD11; this interaction maintains the functional lipoylation of the 2-oxoglutarate dehydrogenase complex. Requires (R)-lipoate as cofactor.

The protein localises to the mitochondrion matrix. The protein resides in the nucleus. The catalysed reaction is N(6)-[(R)-dihydrolipoyl]-L-lysyl-[protein] + succinyl-CoA = N(6)-[(R)-S(8)-succinyldihydrolipoyl]-L-lysyl-[protein] + CoA. It participates in amino-acid degradation; L-lysine degradation via saccharopine pathway; glutaryl-CoA from L-lysine: step 6/6. It functions in the pathway carbohydrate metabolism; tricarboxylic acid cycle. Its function is as follows. Dihydrolipoamide succinyltransferase (E2) component of the 2-oxoglutarate dehydrogenase complex. The 2-oxoglutarate dehydrogenase complex catalyzes the overall conversion of 2-oxoglutarate to succinyl-CoA and CO(2). The 2-oxoglutarate dehydrogenase complex is mainly active in the mitochondrion. A fraction of the 2-oxoglutarate dehydrogenase complex also localizes in the nucleus and is required for lysine succinylation of histones: associates with KAT2A on chromatin and provides succinyl-CoA to histone succinyltransferase KAT2A. The sequence is that of Dihydrolipoyllysine-residue succinyltransferase component of 2-oxoglutarate dehydrogenase complex, mitochondrial from Mesocricetus auratus (Golden hamster).